We begin with the raw amino-acid sequence, 1004 residues long: Presequence protease, mitochondrial (1004 aa).

The transit peptide at Met1 to Ser34 directs the protein to the mitochondrion. Residue His84 coordinates Zn(2+). Glu87 (proton acceptor) is an active-site residue. A Zn(2+)-binding site is contributed by His88. Glu160 is an active-site residue. Glu188 is a Zn(2+) binding site.

It belongs to the peptidase M16 family. PreP subfamily. As to quaternary structure, monomer and homodimer; homodimerization is induced by binding of the substrate. Zn(2+) is required as a cofactor.

It localises to the mitochondrion intermembrane space. The protein resides in the mitochondrion matrix. Degrades mitochondrial transit peptides after their cleavage in the intermembrane space or in the matrix, and presequence peptides; clearance of these peptides is required to keep the presequence processing machinery running. Preferentially cleaves the N-terminal side of paired basic amino acid residues. Also degrades other unstructured peptides. May function as an ATP-dependent peptidase as opposed to a metalloendopeptidase. This chain is Presequence protease, mitochondrial (CYM1), found in Gibberella zeae (strain ATCC MYA-4620 / CBS 123657 / FGSC 9075 / NRRL 31084 / PH-1) (Wheat head blight fungus).